Here is a 1061-residue protein sequence, read N- to C-terminus: Ribonuclease 3 (1061 aa).

Disordered stretches follow at residues 1-20 and 149-244; these read MDFT…QIHQ and PLHS…SYNE. Over residues 156–173 the composition is skewed to basic and acidic residues; sequence KTPERKENEEDSDSEIRS. 2 consecutive RNase III domains span residues 586-759 and 811-935; these read LSVF…LDSG and FHRL…VDKG. 3 residues coordinate Mg(2+): Glu-851, Asp-921, and Glu-924. Residues 962 to 1037 enclose the DRBM domain; that stretch reads DAKSHLQQWC…AENALAALEK (76 aa).

The protein belongs to the ribonuclease III family. Mg(2+) serves as cofactor. It depends on Mn(2+) as a cofactor.

It is found in the nucleus. It carries out the reaction Endonucleolytic cleavage to 5'-phosphomonoester.. Executes the initial step of microRNA (miRNA) processing in the nucleus, that is the cleavage of pri-miRNA to release pre-miRNA. Involved in pre-rRNA processing. Cleaves double-strand RNA and does not cleave single-strand RNA. Involved in fertility. Required for the function or synthesis of the let-7 miRNA. This Caenorhabditis briggsae protein is Ribonuclease 3.